The following is a 1088-amino-acid chain: uncharacterized protein (1088 aa).

S299 is subject to Phosphoserine. A disordered region spans residues 954-980 (PRSSVATTASTESSEQGPKMKRMARRK). Over residues 956 to 968 (SSVATTASTESSE) the composition is skewed to low complexity. S984 is subject to Phosphoserine. T1013 is modified (phosphothreonine). Residues 1063 to 1088 (MKVTDKAKDEDIDPMDPMSPLNKDVS) are disordered. The residue at position 1081 (S1081) is a Phosphoserine.

This is an uncharacterized protein from Saccharomyces cerevisiae (strain ATCC 204508 / S288c) (Baker's yeast).